The following is a 211-amino-acid chain: Small ribosomal subunit protein uS3 (211 aa).

In terms of domain architecture, KH type-2 spans 38–106; sequence LRKFIKKAFY…NIELNIIEVK (69 aa).

This sequence belongs to the universal ribosomal protein uS3 family. As to quaternary structure, part of the 30S ribosomal subunit. Forms a tight complex with proteins S10 and S14.

In terms of biological role, binds the lower part of the 30S subunit head. Binds mRNA in the 70S ribosome, positioning it for translation. The protein is Small ribosomal subunit protein uS3 of Ehrlichia chaffeensis (strain ATCC CRL-10679 / Arkansas).